Consider the following 198-residue polypeptide: dITP/XTP pyrophosphatase (198 aa).

Substrate is bound at residue 10–15; the sequence is SGSDHK. Mg(2+) is bound by residues E43 and D72. D72 acts as the Proton acceptor in catalysis. Substrate contacts are provided by residues S73, 154 to 157, K177, and 182 to 183; these read FGYD and HR.

This sequence belongs to the HAM1 NTPase family. In terms of assembly, homodimer. Mg(2+) is required as a cofactor.

The enzyme catalyses XTP + H2O = XMP + diphosphate + H(+). It carries out the reaction dITP + H2O = dIMP + diphosphate + H(+). The catalysed reaction is ITP + H2O = IMP + diphosphate + H(+). Its function is as follows. Pyrophosphatase that catalyzes the hydrolysis of nucleoside triphosphates to their monophosphate derivatives, with a high preference for the non-canonical purine nucleotides XTP (xanthosine triphosphate), dITP (deoxyinosine triphosphate) and ITP. Seems to function as a house-cleaning enzyme that removes non-canonical purine nucleotides from the nucleotide pool, thus preventing their incorporation into DNA/RNA and avoiding chromosomal lesions. The sequence is that of dITP/XTP pyrophosphatase from Leptospira biflexa serovar Patoc (strain Patoc 1 / Ames).